Here is a 167-residue protein sequence, read N- to C-terminus: ATP synthase subunit b (167 aa).

Residues 15–37 (FWQTVIFLVTLYLLSKFAWGPIM) form a helical membrane-spanning segment.

This sequence belongs to the ATPase B chain family. As to quaternary structure, F-type ATPases have 2 components, F(1) - the catalytic core - and F(0) - the membrane proton channel. F(1) has five subunits: alpha(3), beta(3), gamma(1), delta(1), epsilon(1). F(0) has three main subunits: a(1), b(2) and c(10-14). The alpha and beta chains form an alternating ring which encloses part of the gamma chain. F(1) is attached to F(0) by a central stalk formed by the gamma and epsilon chains, while a peripheral stalk is formed by the delta and b chains.

The protein resides in the cell inner membrane. F(1)F(0) ATP synthase produces ATP from ADP in the presence of a proton or sodium gradient. F-type ATPases consist of two structural domains, F(1) containing the extramembraneous catalytic core and F(0) containing the membrane proton channel, linked together by a central stalk and a peripheral stalk. During catalysis, ATP synthesis in the catalytic domain of F(1) is coupled via a rotary mechanism of the central stalk subunits to proton translocation. In terms of biological role, component of the F(0) channel, it forms part of the peripheral stalk, linking F(1) to F(0). The chain is ATP synthase subunit b from Cytophaga hutchinsonii (strain ATCC 33406 / DSM 1761 / CIP 103989 / NBRC 15051 / NCIMB 9469 / D465).